The chain runs to 349 residues: Acyl-CoA:acyl-CoA alkyltransferase (349 aa).

Catalysis depends on Glu-97, which acts as the Proton acceptor. Cys-123 (acyl-thioester intermediate) is an active-site residue.

This sequence belongs to the thiolase-like superfamily. OleA family.

It carries out the reaction a 1,2-saturated acyl-CoA + an acyl-CoA + H2O = an (R)-2-alkyl-3-oxoalkanoate + 2 CoA + H(+). In terms of biological role, involved in olefin biosynthesis. Catalyzes a non-decarboxylative head-to-head Claisen condensation of two acyl-CoA molecules, generating an (R)-2-alkyl-3-oxoalkanoate. The S.oneidensis oleABCD genes produce 3,6,9,12,15,19,22,25,28-hentriacontanonaene, which may aid the cells in adapting to a sudden drop in temperature. This is Acyl-CoA:acyl-CoA alkyltransferase from Shewanella oneidensis (strain ATCC 700550 / JCM 31522 / CIP 106686 / LMG 19005 / NCIMB 14063 / MR-1).